Here is a 185-residue protein sequence, read N- to C-terminus: Ribosome-recycling factor (185 aa).

The protein belongs to the RRF family.

It localises to the cytoplasm. Responsible for the release of ribosomes from messenger RNA at the termination of protein biosynthesis. May increase the efficiency of translation by recycling ribosomes from one round of translation to another. In Shewanella sp. (strain MR-4), this protein is Ribosome-recycling factor.